The chain runs to 451 residues: LisH domain-containing protein C1711.05 (451 aa).

One can recognise a LisH domain in the interval 6–38 (MKSKVCPLIYHFLQENGYVKTAQTFLKETGDKD). The interval 59–394 (PYLTTEDVGK…VGDPSQWDFA (336 aa)) is disordered. Over residues 73–98 (KESLEKSNDDSQKISKKGAPPEKAHS) the composition is skewed to basic and acidic residues. A compositionally biased stretch (low complexity) spans 99 to 120 (SSEASGSGSSSDESDSSSSESE). The span at 135-145 (SESESSSEDSD) shows a compositional bias: acidic residues. Residues 146 to 174 (SSSSSSDSESESSSEGSDSSSSSSSSESE) are compositionally biased toward low complexity. Acidic residues predominate over residues 189–199 (SESESSSEDSD). Over residues 200–228 (SSSSSSDSESESSSEGSDSSSSSSSSESE) the composition is skewed to low complexity. Composition is skewed to acidic residues over residues 243 to 253 (SESESSSEDSD) and 278 to 300 (DSED…EDSD). A compositionally biased stretch (low complexity) spans 301–319 (STSSSSDSDSSSSSEDGNS). Positions 320–332 (NTDTTTSGEVSAQ) are enriched in polar residues. Over residues 333-343 (SSTNSTSSEES) the composition is skewed to low complexity. Residues 344-365 (TSVKDEDSSKIHDKSLKRKHED) are compositionally biased toward basic and acidic residues. Low complexity predominate over residues 369–380 (STSTKSSRTTKT).

Its subcellular location is the nucleus. It localises to the nucleolus. In Schizosaccharomyces pombe (strain 972 / ATCC 24843) (Fission yeast), this protein is LisH domain-containing protein C1711.05.